A 380-amino-acid chain; its full sequence is Cytochrome b (380 aa).

The next 4 helical transmembrane spans lie at 34 to 54 (FGSL…FLAM), 78 to 99 (WLLR…YFHI), 114 to 134 (WNIG…GYVL), and 179 to 199 (FFTF…IHLL). His84 and His98 together coordinate heme b. Positions 183 and 197 each coordinate heme b. Residue His202 coordinates a ubiquinone. The next 4 membrane-spanning stretches (helical) occupy residues 227-247 (YKDL…STFA), 289-309 (LGGV…PIIH), 321-341 (IAKT…WIGG), and 348-368 (FITI…LLIP).

The protein belongs to the cytochrome b family. In terms of assembly, the cytochrome bc1 complex contains 3 respiratory subunits (MT-CYB, CYC1 and UQCRFS1), 2 core proteins (UQCRC1 and UQCRC2) and probably 6 low-molecular weight proteins. Requires heme b as cofactor.

It localises to the mitochondrion inner membrane. In terms of biological role, component of the ubiquinol-cytochrome c reductase complex (complex III or cytochrome b-c1 complex) that is part of the mitochondrial respiratory chain. The b-c1 complex mediates electron transfer from ubiquinol to cytochrome c. Contributes to the generation of a proton gradient across the mitochondrial membrane that is then used for ATP synthesis. In Pelophylax nigromaculatus (Black-spotted frog), this protein is Cytochrome b (mt-cyb).